Consider the following 507-residue polypeptide: Xylose import ATP-binding protein XylG (507 aa).

2 consecutive ABC transporter domains span residues 5–242 and 259–504; these read LKMT…VGRE and LEVK…LSEK. ATP is bound at residue 37–44; the sequence is GENGSGKS.

This sequence belongs to the ABC transporter superfamily. Xylose importer (TC 3.A.1.2.4) family. The complex is composed of two ATP-binding proteins (XylG), two transmembrane proteins (XylH) and a solute-binding protein (XylF).

It is found in the cell inner membrane. It carries out the reaction D-xylose(out) + ATP + H2O = D-xylose(in) + ADP + phosphate + H(+). Part of the ABC transporter complex XylFGH involved in xylose import. Responsible for energy coupling to the transport system. The protein is Xylose import ATP-binding protein XylG of Photobacterium profundum (strain SS9).